The following is a 361-amino-acid chain: DNA replication and repair protein RecF (361 aa).

Position 30-37 (30-37 (GDNAQGKT)) interacts with ATP.

It belongs to the RecF family.

The protein localises to the cytoplasm. Its function is as follows. The RecF protein is involved in DNA metabolism; it is required for DNA replication and normal SOS inducibility. RecF binds preferentially to single-stranded, linear DNA. It also seems to bind ATP. This Clostridium botulinum (strain Eklund 17B / Type B) protein is DNA replication and repair protein RecF.